Reading from the N-terminus, the 395-residue chain is S-adenosylmethionine synthase (395 aa).

His-16 provides a ligand contact to ATP. Asp-18 contributes to the Mg(2+) binding site. K(+) is bound at residue Glu-44. Glu-57 and Gln-100 together coordinate L-methionine. Positions 100-110 (QSPDIAQGVDD) are flexible loop. ATP contacts are provided by residues 174–176 (DAK), 241–242 (RF), Asp-250, 256–257 (RK), Ala-273, and Lys-277. Residue Asp-250 participates in L-methionine binding. L-methionine is bound at residue Lys-281.

This sequence belongs to the AdoMet synthase family. Homotetramer; dimer of dimers. It depends on Mg(2+) as a cofactor. K(+) serves as cofactor.

Its subcellular location is the cytoplasm. The catalysed reaction is L-methionine + ATP + H2O = S-adenosyl-L-methionine + phosphate + diphosphate. Its pathway is amino-acid biosynthesis; S-adenosyl-L-methionine biosynthesis; S-adenosyl-L-methionine from L-methionine: step 1/1. Catalyzes the formation of S-adenosylmethionine (AdoMet) from methionine and ATP. The overall synthetic reaction is composed of two sequential steps, AdoMet formation and the subsequent tripolyphosphate hydrolysis which occurs prior to release of AdoMet from the enzyme. This chain is S-adenosylmethionine synthase, found in Levilactobacillus brevis (strain ATCC 367 / BCRC 12310 / CIP 105137 / JCM 1170 / LMG 11437 / NCIMB 947 / NCTC 947) (Lactobacillus brevis).